Reading from the N-terminus, the 310-residue chain is Proline dehydrogenase (310 aa).

Position 98 (Lys98) interacts with substrate. Asp135 is an active-site residue. Residues Met136, Gln166, 187-192 (RMVKGA), 229-230 (TH), and 292-295 (RIAE) contribute to the FAD site. Residue Arg187 is part of the active site. 291–292 (RR) contributes to the substrate binding site.

Belongs to the proline dehydrogenase family. FAD serves as cofactor.

The enzyme catalyses L-proline + a quinone = (S)-1-pyrroline-5-carboxylate + a quinol + H(+). It participates in amino-acid degradation; L-proline degradation into L-glutamate; L-glutamate from L-proline: step 1/2. Functionally, converts proline to delta-1-pyrroline-5-carboxylate. The polypeptide is Proline dehydrogenase (Deinococcus radiodurans (strain ATCC 13939 / DSM 20539 / JCM 16871 / CCUG 27074 / LMG 4051 / NBRC 15346 / NCIMB 9279 / VKM B-1422 / R1)).